Reading from the N-terminus, the 224-residue chain is CMRF35-like molecule 6 (224 aa).

A signal peptide spans 1-20; the sequence is MTARAWASWRSSALLLLLVP. At 21-183 the chain is on the extracellular side; sequence GYFPLSHPMT…HPGSLFSNVR (163 aa). The region spanning 22–130 is the Ig-like V-type domain; that stretch reads YFPLSHPMTV…HDPIVEVEVS (109 aa). Intrachain disulfides connect cysteine 43-cysteine 110 and cysteine 57-cysteine 65. N-linked (GlcNAc...) asparagine glycosylation is found at asparagine 90 and asparagine 99. Polar residues predominate over residues 136-151; it reads TTTASSPQSSMGTSGP. The interval 136 to 174 is disordered; that stretch reads TTTASSPQSSMGTSGPPTKLPVHTWPSVTRKDSPEPSPH. The chain crosses the membrane as a helical span at residues 184 to 204; that stretch reads FLLLVLLELPLLLSMLGAVLW. At 205–224 the chain is on the cytoplasmic side; it reads VNRPQRSSRSRQNWPKGENQ.

The protein belongs to the CD300 family. In terms of tissue distribution, present on the surface of monocytes, neutrophils, a proportion of peripheral blood T- and B-lymphocytes and lymphocytic cell lines.

The protein localises to the cell membrane. This chain is CMRF35-like molecule 6 (CD300C), found in Homo sapiens (Human).